A 164-amino-acid chain; its full sequence is MALRYFSHLPEELKEKIMNEHLKEIKKKEFLENVIKAACAVFEGLTKKESVEEDDILRFSGFLEGLSAYYAEATKKKCLVRWKKSVAINLKWRVMEEMHYKLYGFADMEDLYCSELGFPNYGEDDVAYHDGAIVNCKQLEVVFDDLGIEFMSIVIDRGSIKIEL.

Residues 9–22 (LPEELKEKIMNEHL) are binding to host SKP1 protein. Residues 111-115 (LYCSE) carry the LXCXE motif, interaction with host RBR motif.

This sequence belongs to the nanovirus Clink protein family. As to quaternary structure, interacts with host SKP1. Interacts (via LXCXE domain) with host retinoblastoma-related protein 1 (RBR1). Interacts (via LXCXE domain) with retinoblastoma-related proteins (RBR).

Its function is as follows. Interacts with and disrupts the function of host retinoblastoma-related proteins RBR, which are key regulators of the cell cycle. Induces transcriptional activation of E2F-regulated S-phase and G2/M-phase-specific genes. Inactivation of the ability of RBR to arrest the cell cycle leads to the stimulation of viral DNA replication. This Trifolium subterraneum (Subterranean clover) protein is Cell cycle link protein (DNA-C).